A 342-amino-acid polypeptide reads, in one-letter code: CMP-N-acetylneuraminate-beta-galactosamide-alpha-2,3-sialyltransferase 1 (342 aa).

Topologically, residues 1-10 (MVTVRKRNVK) are cytoplasmic. A helical; Signal-anchor for type II membrane protein membrane pass occupies residues 11–28 (VFTFAFVLITVTSFLLNY). The Lumenal segment spans residues 29-342 (KHQVTMTTWD…IEKIKFFKGR (314 aa)). 3 disulfides stabilise this stretch: cysteine 61–cysteine 66, cysteine 63–cysteine 141, and cysteine 144–cysteine 283. Asparagine 81 is a glycosylation site (N-linked (GlcNAc...) asparagine). Substrate is bound at residue glutamine 107. N-linked (GlcNAc...) asparagine glycosylation is present at asparagine 116. Residues asparagine 149 and asparagine 172 each contribute to the substrate site. Asparagine 203 and asparagine 229 each carry an N-linked (GlcNAc...) asparagine glycan. Substrate is bound by residues tyrosine 232, tyrosine 268, glycine 272, glycine 292, and histidine 301. Asparagine 306 is a glycosylation site (N-linked (GlcNAc...) asparagine). Histidine 318 is a binding site for substrate. N-linked (GlcNAc...) asparagine glycosylation occurs at asparagine 325.

Belongs to the glycosyltransferase 29 family. The soluble form derives from the membrane form by proteolytic processing.

Its subcellular location is the golgi apparatus. It localises to the golgi stack membrane. The protein resides in the secreted. The enzyme catalyses a beta-D-galactosyl-(1-&gt;3)-N-acetyl-alpha-D-galactosaminyl derivative + CMP-N-acetyl-beta-neuraminate = an N-acetyl-alpha-neuraminyl-(2-&gt;3)-beta-D-galactosyl-(1-&gt;3)-N-acetyl-alpha-D-galactosaminyl derivative + CMP + H(+). It functions in the pathway protein modification; protein glycosylation. Responsible for the synthesis of the sequence NeuAc-alpha-2,3-Gal-beta-1,3-GalNAc- found on sugar chains O-linked to Thr or Ser and also as a terminal sequence on certain gangliosides. SIAT4A and SIAT4B sialylate the same acceptor substrates but exhibit different Km values. The polypeptide is CMP-N-acetylneuraminate-beta-galactosamide-alpha-2,3-sialyltransferase 1 (ST3GAL1) (Gallus gallus (Chicken)).